The sequence spans 366 residues: Putative RING-H2 finger protein ATL21C (366 aa).

The signal sequence occupies residues 1–23 (MTFSKQLFPFVFFLLFLVSLRHA). Residues 243 to 263 (LVLVISLSAVTVFVFPTCIAI) form a helical membrane-spanning segment. Residues 320 to 362 (CPICLSEYASKETVRFIPECDHCFHVECIDVWLKIHGSCPLCR) form an RING-type; atypical zinc finger.

This sequence belongs to the RING-type zinc finger family. ATL subfamily.

It is found in the membrane. The enzyme catalyses S-ubiquitinyl-[E2 ubiquitin-conjugating enzyme]-L-cysteine + [acceptor protein]-L-lysine = [E2 ubiquitin-conjugating enzyme]-L-cysteine + N(6)-ubiquitinyl-[acceptor protein]-L-lysine.. The protein operates within protein modification; protein ubiquitination. The chain is Putative RING-H2 finger protein ATL21C (ATL21C) from Arabidopsis thaliana (Mouse-ear cress).